The chain runs to 65 residues: Putative antitoxin MJECL31 (65 aa).

It belongs to the UPF0165 family.

Functionally, possibly the antitoxin component of a type II toxin-antitoxin (TA) system. The polypeptide is Putative antitoxin MJECL31 (Methanocaldococcus jannaschii (strain ATCC 43067 / DSM 2661 / JAL-1 / JCM 10045 / NBRC 100440) (Methanococcus jannaschii)).